We begin with the raw amino-acid sequence, 236 residues long: VVGGDECNINEHPFLVALYTSTSSTIHCGGALINREWVLTAAHCDRRNIRIKLGMHSKNIRNEDEQIRVPRGKYFCLNTKFPNGLDKDIMLIRLRRPVTYSTHIAPVSLPSRSRGVGSRCRIMGWGKISTTEDTYPDVPHCTNIFIVKHKWCEPLYPWVPADSRTLCAGILKGGRDTCHGDSGGPLICNGQIQGIVAGGSEPCGQHLKPAVYTKVFDYNNWIQNIIAGNRTVTCPP.

The region spanning 1–227 (VVGGDECNIN…YNNWIQNIIA (227 aa)) is the Peptidase S1 domain. 6 disulfide bridges follow: cysteine 7–cysteine 141, cysteine 28–cysteine 44, cysteine 76–cysteine 234, cysteine 120–cysteine 188, cysteine 152–cysteine 167, and cysteine 178–cysteine 203. Active-site charge relay system residues include histidine 43 and aspartate 88. The active-site Charge relay system is serine 182. N-linked (GlcNAc...) asparagine glycosylation is present at asparagine 229.

It belongs to the peptidase S1 family. Snake venom subfamily. Monomer. Expressed by the venom gland.

Its subcellular location is the secreted. It catalyses the reaction Fully activates human clotting factor V by a single cleavage at the 1545-Trp-Tyr-Leu-Arg-|-Ser-Asn-Asn-Gly-1552 bond. Cattle, but not rabbit, factor V is cleaved, and no other proteins of the clotting system are attacked. Esterase activity is observed on Bz-Arg-OEt and Tos-Arg-OMe, and amidase activity on Phe-pipecolyl-Arg-NHPhNO2.. With respect to regulation, inhibited by D-Phe-Pro-Arg-chloromethyl ketone (FPRCK) (97%), PMSF (76%), and benzamidine (50%). Is not inhibited by BPTI, antithrombin and EDTA. Its function is as follows. Venom serine protease that activates factor V (F5) in a calcium-independent manner. It cleaves the Arg(1545)-Ser(1546) linkage in the human factor V molecule. Induces the coagulation of mammalian plasma. In Daboia siamensis (Eastern Russel's viper), this protein is Factor V activator RVV-V alpha.